The primary structure comprises 214 residues: Pyrrolidone-carboxylate peptidase (214 aa).

Catalysis depends on residues E80, C143, and H166.

The protein belongs to the peptidase C15 family. Homotetramer.

The protein resides in the cytoplasm. The catalysed reaction is Release of an N-terminal pyroglutamyl group from a polypeptide, the second amino acid generally not being Pro.. Its function is as follows. Removes 5-oxoproline from various penultimate amino acid residues except L-proline. In Enterobacter sp. (strain 638), this protein is Pyrrolidone-carboxylate peptidase.